The primary structure comprises 97 residues: U6-theraphotoxin-Hhn1a 2 (97 aa).

The first 33 residues, 1–33 (MLIKQFSRRPKNMKVQILLAFAALFVLAVGSYA), serve as a signal peptide directing secretion. A propeptide spanning residues 34-61 (SESKKLDLRDASFSAMFSADYQLNPQER) is cleaved from the precursor. Cystine bridges form between C63-C77, C70-C82, and C76-C89.

The protein belongs to the neurotoxin 10 (Hwtx-1) family. 12 (Hntx-12) subfamily. In terms of tissue distribution, expressed by the venom gland.

It localises to the secreted. In terms of biological role, ion channel inhibitor. This chain is U6-theraphotoxin-Hhn1a 2, found in Cyriopagopus hainanus (Chinese bird spider).